Here is a 399-residue protein sequence, read N- to C-terminus: Elongation factor Tu (399 aa).

Positions 10 to 209 constitute a tr-type G domain; the sequence is NPHVNIGTIG…EVDSYIPTPE (200 aa). Residues 19 to 26 are G1; that stretch reads GHVYHGKT. 19–26 is a binding site for GTP; sequence GHVYHGKT. Threonine 26 serves as a coordination point for Mg(2+). Residues 60-64 are G2; the sequence is GITIA. The G3 stretch occupies residues 81–84; the sequence is DCPG. Residues 81–85 and 136–139 each bind GTP; these read DCPGH and NKQD. Residues 136 to 139 are G4; that stretch reads NKQD. The tract at residues 174 to 176 is G5; the sequence is SAL.

Belongs to the TRAFAC class translation factor GTPase superfamily. Classic translation factor GTPase family. EF-Tu/EF-1A subfamily. In terms of assembly, monomer.

The protein resides in the cytoplasm. It catalyses the reaction GTP + H2O = GDP + phosphate + H(+). Its function is as follows. GTP hydrolase that promotes the GTP-dependent binding of aminoacyl-tRNA to the A-site of ribosomes during protein biosynthesis. In Helicobacter pylori (strain J99 / ATCC 700824) (Campylobacter pylori J99), this protein is Elongation factor Tu.